We begin with the raw amino-acid sequence, 363 residues long: NAD(P)H-quinone oxidoreductase subunit 1, chloroplastic (363 aa).

Helical transmembrane passes span 27-47, 104-124, 127-147, 248-268, 300-320, and 343-363; these read VWLL…VLVI, IAVI…HLVL, LSIG…GLLM, YSGI…LVSS, VFGM…FLFI, and FLLP…LFSL.

This sequence belongs to the complex I subunit 1 family. As to quaternary structure, NDH is composed of at least 16 different subunits, 5 of which are encoded in the nucleus.

The protein localises to the plastid. Its subcellular location is the chloroplast thylakoid membrane. The catalysed reaction is a plastoquinone + NADH + (n+1) H(+)(in) = a plastoquinol + NAD(+) + n H(+)(out). It catalyses the reaction a plastoquinone + NADPH + (n+1) H(+)(in) = a plastoquinol + NADP(+) + n H(+)(out). Its function is as follows. NDH shuttles electrons from NAD(P)H:plastoquinone, via FMN and iron-sulfur (Fe-S) centers, to quinones in the photosynthetic chain and possibly in a chloroplast respiratory chain. The immediate electron acceptor for the enzyme in this species is believed to be plastoquinone. Couples the redox reaction to proton translocation, and thus conserves the redox energy in a proton gradient. The polypeptide is NAD(P)H-quinone oxidoreductase subunit 1, chloroplastic (Ranunculus macranthus (Large buttercup)).